Reading from the N-terminus, the 545-residue chain is Sphingomyelin phosphodiesterase 5 (545 aa).

A mitochondrion-targeting transit peptide spans 1–35 (MSLRESPFPNGFLEGLHAVGWGLIFPCFWFLDRLI). Topologically, residues 36–64 (AVCISTTLERMWRLEQECYLHPLKVVFGS) are mitochondrial matrix. Residues 65 to 85 (ILFFILFVISTPFALLGFILW) traverse the membrane as a helical; Signal-anchor for type II membrane protein segment. The Mitochondrial intermembrane segment spans residues 86–545 (APLQAIRRPF…LSVSLDSEQN (460 aa)). Glu258 is a binding site for Mg(2+). His529 serves as the catalytic Proton acceptor.

This sequence belongs to the neutral sphingomyelinase family. Mg(2+) is required as a cofactor. The cofactor is Mn(2+).

It localises to the mitochondrion inner membrane. Its subcellular location is the endoplasmic reticulum membrane. The enzyme catalyses a sphingomyelin + H2O = phosphocholine + an N-acylsphing-4-enine + H(+). The catalysed reaction is N-(hexadecanoyl)-sphing-4-enine-1-phosphocholine + H2O = N-hexadecanoylsphing-4-enine + phosphocholine + H(+). The protein operates within lipid metabolism; sphingolipid metabolism. With respect to regulation, activated by the phospholipids cardiolipin, phosphatidylserine, and phosphatidylethanolamine. Strongest activation with cardiolipin. Catalyzes the hydrolysis of membrane sphingomyelin to form phosphorylcholine and ceramide. This is Sphingomyelin phosphodiesterase 5 from Danio rerio (Zebrafish).